Here is a 345-residue protein sequence, read N- to C-terminus: D-fructose 1,6-bisphosphatase class 2/sedoheptulose 1,7-bisphosphatase (345 aa).

Mn(2+) is bound by residues Asp33, Glu57, Asp97, and Glu100. Residues 100–102 (EGT), Tyr131, 176–178 (RPR), and 198–200 (DGD) contribute to the substrate site. Glu225 contributes to the Mn(2+) binding site.

It belongs to the FBPase class 2 family. Homotetramer. Requires Mn(2+) as cofactor.

It catalyses the reaction beta-D-fructose 1,6-bisphosphate + H2O = beta-D-fructose 6-phosphate + phosphate. The enzyme catalyses D-sedoheptulose 1,7-bisphosphate + H2O = D-sedoheptulose 7-phosphate + phosphate. It functions in the pathway carbohydrate biosynthesis; Calvin cycle. Functionally, catalyzes the hydrolysis of fructose 1,6-bisphosphate (Fru 1,6-P2) and sedoheptulose 1,7-bisphosphate (Sed 1,7-P2) to fructose 6-phosphate and sedoheptulose 7-phosphate, respectively. The protein is D-fructose 1,6-bisphosphatase class 2/sedoheptulose 1,7-bisphosphatase of Trichodesmium erythraeum (strain IMS101).